The sequence spans 308 residues: Urease subunit beta (308 aa).

Residues 131-308 (GGIDTHIHFI…STNPTIPFTK (178 aa)) enclose the Urease domain. The Ni(2+) site is built by His136, His138, Lys219, His248, and His274. The residue at position 219 (Lys219) is an N6-carboxylysine.

This sequence belongs to the metallo-dependent hydrolases superfamily. Urease alpha subunit family. Heterohexamer of 3 UreA (alpha) and 3 UreB (beta) subunits. Ni cation serves as cofactor. Carboxylation allows a single lysine to coordinate two nickel ions.

It localises to the cytoplasm. The enzyme catalyses urea + 2 H2O + H(+) = hydrogencarbonate + 2 NH4(+). It functions in the pathway nitrogen metabolism; urea degradation; CO(2) and NH(3) from urea (urease route): step 1/1. The chain is Urease subunit beta (ureB) from Helicobacter mustelae.